A 145-amino-acid chain; its full sequence is Cell division protein SepF (145 aa).

Belongs to the SepF family. In terms of assembly, homodimer. Interacts with FtsZ.

It is found in the cytoplasm. Cell division protein that is part of the divisome complex and is recruited early to the Z-ring. Probably stimulates Z-ring formation, perhaps through the cross-linking of FtsZ protofilaments. Its function overlaps with FtsA. The sequence is that of Cell division protein SepF from Lactobacillus helveticus (strain DPC 4571).